Here is a 249-residue protein sequence, read N- to C-terminus: Adenosylcobinamide-GDP ribazoletransferase (249 aa).

The next 6 membrane-spanning stretches (helical) occupy residues L36 to G56, L57 to H77, V106 to F126, K133 to T153, L188 to L208, and G226 to I246.

This sequence belongs to the CobS family. Requires Mg(2+) as cofactor.

The protein localises to the cell membrane. The enzyme catalyses alpha-ribazole + adenosylcob(III)inamide-GDP = adenosylcob(III)alamin + GMP + H(+). The catalysed reaction is alpha-ribazole 5'-phosphate + adenosylcob(III)inamide-GDP = adenosylcob(III)alamin 5'-phosphate + GMP + H(+). It participates in cofactor biosynthesis; adenosylcobalamin biosynthesis; adenosylcobalamin from cob(II)yrinate a,c-diamide: step 7/7. Functionally, joins adenosylcobinamide-GDP and alpha-ribazole to generate adenosylcobalamin (Ado-cobalamin). Also synthesizes adenosylcobalamin 5'-phosphate from adenosylcobinamide-GDP and alpha-ribazole 5'-phosphate. The chain is Adenosylcobinamide-GDP ribazoletransferase from Desulforamulus reducens (strain ATCC BAA-1160 / DSM 100696 / MI-1) (Desulfotomaculum reducens).